Consider the following 893-residue polypeptide: MATEEFIIRIPPYHYIHVLDQNSNVSHVEVGPKTYIRQDNERVLFAPMRMVTVPPRHYCTVANPVSRDAQGLVLFDVTGQVRLRHADLEIRLAQDPFPLYPGEVLEKDITPLQVVLPNTALHLKALLDFEDKDGDKVVAGDEWLLEGPGTYIPRKEVEVVEIIQATIIRQNQALRLRARKECWDRDGKERVTGEEWLVTTVGAYLPAVFEEVLDLVDAVILTEKTALHLRARRNFRDFRGVSRRTGEEWLVTVQDTEAHVPDVHEEVLGVVPITTLGPHNYCVILDPVGPDGKNQLGQKRVVKGEKSFFLQPGEQLEQGIQDVYVLSEQQGLLLRALQPLEDGEDEEKVSHQAGDRWLIRGPLEYVPSAKVEVVEERQAIPLDENEGIYVQDVKTGKVRAVIGSTYMLTQDEVLWEKELPPGVEELLNKGQDPLADRGEKDTAKSLQPLAPRNKTRVVSYRVPHNAAVQVYDYREKRARVVFGPELVSLGPEEQFTVLSLSAGRPKRPHARRALCLLLGPDFFTDVITIETADHARLQLQLAYNWHFQVNDRKDPQETAKLFSVPDFVGDACKAIASRVRGAVASVTFDDFHKNSARIIRAAVFGFETSEAKDPDGMALPRPRDQAVFPQNGLVVSSVDVQSVEPVDQRTRDALQRSVQLAIEITTNSQEAAAKHEAQRLEQEARGRLERQKILDQSEAEKARKELLELEALSMAVESTGTAKAEAESRAEAARIEGEGSVLQAKLKAQALAIETEAELQRVQKVRELELVYARAQLELGVSKAQQLAEVEVKKFKQMTEAIGPSTIRDLAVAGPEMQVKLLQSLGLKSTLITDGSTPINLFNTAFGLLGMGPEGQPLGRRVASGPSPGEGISPQSAQAPQAPGDNHVVPVLR.

Position 2 is an N-acetylalanine (Ala2). MVP repeat units follow at residues 2 to 56 (ATEE…VPPR), 57 to 111 (HYCT…DITP), 112 to 164 (LQVV…EIIQ), 165 to 217 (ATII…DLVD), 218 to 272 (AVIL…GVVP), 273 to 323 (ITTL…IQDV), 324 to 379 (YVLS…ERQA), 380 to 457 (IPLD…KTRV), and 458 to 520 (VSYR…LLGP). Residue Lys444 forms a Glycyl lysine isopeptide (Lys-Gly) (interchain with G-Cter in SUMO2) linkage. Ser445 is modified (phosphoserine). Residue Lys704 forms a Glycyl lysine isopeptide (Lys-Gly) (interchain with G-Cter in SUMO2) linkage. Residues 856 to 893 (QPLGRRVASGPSPGEGISPQSAQAPQAPGDNHVVPVLR) are disordered.

The vault ribonucleoprotein particle is a huge (400 A x 670 A) cage structure of 12.9 MDa. It consists of a dimer of half-vaults, with each half-vault comprising 39 identical major vault protein (MVP) chains, PARP4 and one or more vault RNAs (vRNAs). Interacts with TEP1. Interacts with PTEN and activated MAPK1. The phosphorylated protein interacts with the SH2 domains of PTPN11 and SRC. Interacts with APEX1. May interact with ZNF540. In terms of processing, phosphorylated on Tyr residues after EGF stimulation. Post-translationally, dephosphorylated by PTPN11.

It is found in the cytoplasm. The protein localises to the nucleus. Required for normal vault structure. Vaults are multi-subunit structures that may act as scaffolds for proteins involved in signal transduction. Vaults may also play a role in nucleo-cytoplasmic transport. Down-regulates IFNG-mediated STAT1 signaling and subsequent activation of JAK. Down-regulates SRC activity and signaling through MAP kinases. The protein is Major vault protein (MVP) of Pongo abelii (Sumatran orangutan).